Reading from the N-terminus, the 629-residue chain is Phosphomethylpyrimidine synthase (629 aa).

The tract at residues 1 to 24 is disordered; it reads MSTKPKNAAHLSESAQVDSGSVQP. Over residues 13 to 24 the composition is skewed to polar residues; it reads ESAQVDSGSVQP. Residues N233, M262, Y291, H327, 347–349, 388–391, and E427 contribute to the substrate site; these read SRG and DGLR. H431 lines the Zn(2+) pocket. Residue Y454 coordinates substrate. H495 provides a ligand contact to Zn(2+). 3 residues coordinate [4Fe-4S] cluster: C575, C578, and C583.

Belongs to the ThiC family. Homodimer. It depends on [4Fe-4S] cluster as a cofactor.

The catalysed reaction is 5-amino-1-(5-phospho-beta-D-ribosyl)imidazole + S-adenosyl-L-methionine = 4-amino-2-methyl-5-(phosphooxymethyl)pyrimidine + CO + 5'-deoxyadenosine + formate + L-methionine + 3 H(+). It functions in the pathway cofactor biosynthesis; thiamine diphosphate biosynthesis. Catalyzes the synthesis of the hydroxymethylpyrimidine phosphate (HMP-P) moiety of thiamine from aminoimidazole ribotide (AIR) in a radical S-adenosyl-L-methionine (SAM)-dependent reaction. This Pseudomonas syringae pv. tomato (strain ATCC BAA-871 / DC3000) protein is Phosphomethylpyrimidine synthase.